Consider the following 641-residue polypeptide: 1-deoxy-D-xylulose-5-phosphate synthase (641 aa).

Residues histidine 79 and 120–122 (AHS) each bind thiamine diphosphate. Residue aspartate 151 coordinates Mg(2+). Thiamine diphosphate-binding positions include 152–153 (GA), asparagine 180, tyrosine 290, and glutamate 372. Residue asparagine 180 participates in Mg(2+) binding.

The protein belongs to the transketolase family. DXPS subfamily. Homodimer. Mg(2+) is required as a cofactor. Requires thiamine diphosphate as cofactor.

It catalyses the reaction D-glyceraldehyde 3-phosphate + pyruvate + H(+) = 1-deoxy-D-xylulose 5-phosphate + CO2. It functions in the pathway metabolic intermediate biosynthesis; 1-deoxy-D-xylulose 5-phosphate biosynthesis; 1-deoxy-D-xylulose 5-phosphate from D-glyceraldehyde 3-phosphate and pyruvate: step 1/1. Functionally, catalyzes the acyloin condensation reaction between C atoms 2 and 3 of pyruvate and glyceraldehyde 3-phosphate to yield 1-deoxy-D-xylulose-5-phosphate (DXP). The polypeptide is 1-deoxy-D-xylulose-5-phosphate synthase (Bradyrhizobium sp. (strain ORS 278)).